A 443-amino-acid polypeptide reads, in one-letter code: MFLAQEIIRKKRNGDVLSTAEIQFFVDGITHNTVSEGQIAAFGMAVYFKDMNMDERIALTIAMRDSGTVLNWDSLGLNGPIIDKHSTGGVGDVISLMLGPMAAACGGYVPMISGRGLGHTGGTLDKFDAIPGYQTEPSSELFRKVVKDAGVAIIGQTGDLVPADKRFYSIRDNTATVESISLITASILSKKLAAGLDALAMDVKVGSGAFMPTYEASEELARSITAVANGAGTKTTALLTDMNQVLASCAGNAVEVREAINFLTGQYRNPRLYAVTMGLCAEMLILGGIAQNEAEARHKLNTVLDNGKAAEAFAKMVSGLGGPTDFVEAYDKYLPHAKIVRPVYANTSGFAYKMDTRELGLAVVTLGGGRRKPGDALDYSVGLTQVCALGQEVNKDVPLAMIHAQSEDAFAEAAAAIQQAIIIGDSAPEKTPEIYRYIRASDL.

The protein belongs to the thymidine/pyrimidine-nucleoside phosphorylase family. As to quaternary structure, homodimer.

The enzyme catalyses thymidine + phosphate = 2-deoxy-alpha-D-ribose 1-phosphate + thymine. It functions in the pathway pyrimidine metabolism; dTMP biosynthesis via salvage pathway; dTMP from thymine: step 1/2. Functionally, the enzymes which catalyze the reversible phosphorolysis of pyrimidine nucleosides are involved in the degradation of these compounds and in their utilization as carbon and energy sources, or in the rescue of pyrimidine bases for nucleotide synthesis. In Shewanella frigidimarina (strain NCIMB 400), this protein is Thymidine phosphorylase.